Here is a 252-residue protein sequence, read N- to C-terminus: MAADKVDPIHQFHIIKLVPINIGGYDLSFTNSALFMVATVVVAAAFLFLTTSSRSLVPGRLQSISEMAYEFVANMLRDAAGTQGMKFFPLVFSLFMFVLVANLLGLFPYFFTVTSHIIVTFGLAILVIGTVIVYGFMKHGLGFLKLFVPKGVPLVMMVLVVPIEVISFVSRPISLSVRLFANMLAGHITLKVFSGFVVSLSALGAVGVAGSILPLAMAVALTALELLVAFLQAYVFAVLTCMYLNDALHPSH.

6 helical membrane-spanning segments follow: residues 29 to 49, 87 to 107, 117 to 137, 146 to 166, 188 to 208, and 211 to 231; these read FTNS…FLFL, FFPL…LGLF, IIVT…YGFM, LFVP…IEVI, ITLK…AVGV, and SILP…VAFL.

This sequence belongs to the ATPase A chain family. As to quaternary structure, F-type ATPases have 2 components, CF(1) - the catalytic core - and CF(0) - the membrane proton channel. CF(1) has five subunits: alpha(3), beta(3), gamma(1), delta(1), epsilon(1). CF(0) has three main subunits: a(1), b(2) and c(9-12). The alpha and beta chains form an alternating ring which encloses part of the gamma chain. CF(1) is attached to CF(0) by a central stalk formed by the gamma and epsilon chains, while a peripheral stalk is formed by the delta and b chains.

The protein localises to the cell inner membrane. In terms of biological role, key component of the proton channel; it plays a direct role in the translocation of protons across the membrane. This is ATP synthase subunit a from Mesorhizobium japonicum (strain LMG 29417 / CECT 9101 / MAFF 303099) (Mesorhizobium loti (strain MAFF 303099)).